Here is a 765-residue protein sequence, read N- to C-terminus: DNA topoisomerase 1 (765 aa).

Residues 1–23 show a composition bias toward basic and acidic residues; sequence MSGDHLHNDSQIEADFRLNDSHK. The segment at 1–199 is disordered; sequence MSGDHLHNDS…NKKKKPKKEE (199 aa). N-acetylserine is present on S2. A phosphoserine mark is found at S2 and S10. Basic residues predominate over residues 24 to 39; that stretch reads HKDKHKDREHRHKEHK. Residues 40–108 show a composition bias toward basic and acidic residues; sequence KEKDREKSKH…DAKIKKEKEN (69 aa). S57 carries the post-translational modification Phosphoserine. K101 participates in a covalent cross-link: Glycyl lysine isopeptide (Lys-Gly) (interchain with G-Cter in SUMO2). Residue K103 forms a Glycyl lysine isopeptide (Lys-Gly) (interchain with G-Cter in SUMO); alternate linkage. Residue K103 forms a Glycyl lysine isopeptide (Lys-Gly) (interchain with G-Cter in SUMO2); alternate linkage. S112 carries the post-translational modification Phosphoserine. K117 is covalently cross-linked (Glycyl lysine isopeptide (Lys-Gly) (interchain with G-Cter in SUMO); alternate). A Glycyl lysine isopeptide (Lys-Gly) (interchain with G-Cter in SUMO2); alternate cross-link involves residue K117. K117 is covalently cross-linked (Glycyl lysine isopeptide (Lys-Gly) (interchain with G-Cter in SUMO1); alternate). Basic and acidic residues predominate over residues 129–166; sequence PKEDIKPLKRPRDEDDADYKPKKIKTEDTKKEKKRKLE. Glycyl lysine isopeptide (Lys-Gly) (interchain with G-Cter in SUMO2) cross-links involve residues K134 and K148. K153 is covalently cross-linked (Glycyl lysine isopeptide (Lys-Gly) (interchain with G-Cter in SUMO); alternate). K153 participates in a covalent cross-link: Glycyl lysine isopeptide (Lys-Gly) (interchain with G-Cter in SUMO2); alternate. Glycyl lysine isopeptide (Lys-Gly) (interchain with G-Cter in SUMO2) cross-links involve residues K158 and K164. Residue K172 forms a Glycyl lysine isopeptide (Lys-Gly) (interchain with G-Cter in SUMO2); alternate linkage. K172 is modified (N6-acetyllysine; alternate). A compositionally biased stretch (basic and acidic residues) spans 179 to 199; the sequence is KDKDKKVPEPDNKKKKPKKEE. A Glycyl lysine isopeptide (Lys-Gly) (interchain with G-Cter in SUMO2) cross-link involves residue K204. K280 carries the N6-acetyllysine modification. A Glycyl lysine isopeptide (Lys-Gly) (interchain with G-Cter in SUMO2) cross-link involves residue K336. 2 interaction with DNA regions span residues 425-426 and 488-493; these read KY and RAGNEK. The Topo IB-type catalytic domain occupies 432 to 765; that stretch reads SSRIKGEKDW…IDMADEDYEF (334 aa). At S506 the chain carries Phosphoserine; by CK2. K549 is covalently cross-linked (Glycyl lysine isopeptide (Lys-Gly) (interchain with G-Cter in SUMO2)). Residues 585-587 are interaction with DNA; sequence TAK. Glycyl lysine isopeptide (Lys-Gly) (interchain with G-Cter in SUMO2) cross-links involve residues K642, K700, and K712. Y723 (O-(3'-phospho-DNA)-tyrosine intermediate) is an active-site residue.

The protein belongs to the type IB topoisomerase family. As to quaternary structure, monomer. Interacts with ERCC6. Interacts with TPRN; TPRN interacts with a number of DNA damage response proteins, is recruited to sites of DNA damage and may play a role in DNA damage repair. (Microbial infection) Interacts with SV40 Large T antigen; this interactions allows viral DNA replication. Sumoylated. Lys-117 is the main site of sumoylation. Sumoylation plays a role in partitioning TOP1 between nucleoli and nucleoplasm. Levels are dramatically increased on camptothecin (CPT) treatment. Post-translationally, phosphorylation at Ser-506 by CK2 increases binding to supercoiled DNA and sensitivity to camptothecin. In terms of tissue distribution, endothelial cells.

The protein localises to the nucleus. Its subcellular location is the nucleolus. It is found in the nucleoplasm. It catalyses the reaction ATP-independent breakage of single-stranded DNA, followed by passage and rejoining.. Its activity is regulated as follows. Specifically inhibited by camptothecin (CPT), a plant alkaloid with antitumor activity. Releases the supercoiling and torsional tension of DNA introduced during the DNA replication and transcription by transiently cleaving and rejoining one strand of the DNA duplex. Introduces a single-strand break via transesterification at a target site in duplex DNA. The scissile phosphodiester is attacked by the catalytic tyrosine of the enzyme, resulting in the formation of a DNA-(3'-phosphotyrosyl)-enzyme intermediate and the expulsion of a 5'-OH DNA strand. The free DNA strand then rotates around the intact phosphodiester bond on the opposing strand, thus removing DNA supercoils. Finally, in the religation step, the DNA 5'-OH attacks the covalent intermediate to expel the active-site tyrosine and restore the DNA phosphodiester backbone. Regulates the alternative splicing of tissue factor (F3) pre-mRNA in endothelial cells. Involved in the circadian transcription of the core circadian clock component BMAL1 by altering the chromatin structure around the ROR response elements (ROREs) on the BMAL1 promoter. The chain is DNA topoisomerase 1 (TOP1) from Homo sapiens (Human).